The primary structure comprises 91 residues: MSISASEARQRLFPLIEQVNTDHQPVRITSRAGDAVLMSADDYDAWQETVYLLRSPENARRLMEAVARDKAGHSAFTKSVDELREMAGGEE.

Belongs to the phD/YefM antitoxin family. In terms of assembly, homodimer.

Functionally, antitoxin component of a type II toxin-antitoxin (TA) system. A probable antitoxin for the putative mRNA interferase RelK. This Mycobacterium tuberculosis (strain CDC 1551 / Oshkosh) protein is Antitoxin RelJ (relJ).